Here is a 508-residue protein sequence, read N- to C-terminus: MAALGSSSQNVTEYVVRVPKNTAKRYNIMAFNAADKVNFATWNQARLERDLSNKKIYQEEEMPESGAGSEFNRKLREEARRKKYGIVLKEFRPEDQPWLLRVNGKSGRKFKGIKKGGVTENTAYYIFTQCADGAFEAFPVQNWYNFTPLARHRTLTAEEAEEEWERRNKVLNHFSIMQQRRLKDQDQDEDEEEKEKRSRKKPSELRIHDLEDDLEMSSDASDASGEEGSRTSKAKKKAPVTKAGRKKKKKKGSDDEAFEDSDDGDFEGQEVDYMSDGSSSSPDETEGKPKVPQQEDGPKGVDEQSESSEESEEEKPPEEDKEEEEEKKAPTPQEKKRRKDSSDDSDSSEESDIDSETSSALFMAKKKTPPKRERKPSGGSSKGTSRPGTPSAEAASTSSTLRAAASKLEQGKRTSETPAAKRLRMDTGPQSLSGKSTPSSGDVQVTEDAVRRYLTRKPMTTKDLLKKFQTKKTGLSSEQTVNVLAQILKRLNPERKMIGDKMHFSLKE.

Position 2 is an N-acetylalanine (Ala-2). Thr-156 is subject to Phosphothreonine. A disordered region spans residues 177-446; the sequence is MQQRRLKDQD…TPSSGDVQVT (270 aa). Phosphoserine is present on residues Ser-217, Ser-218, Ser-221, and Ser-224. A compositionally biased stretch (basic residues) spans 232–251; the sequence is SKAKKKAPVTKAGRKKKKKK. Composition is skewed to acidic residues over residues 255-270 and 303-325; these read DEAFEDSDDGDFEGQE and EQSESSEESEEEKPPEEDKEEEE. Phosphothreonine is present on Thr-331. Over residues 343 to 355 the composition is skewed to acidic residues; that stretch reads DDSDSSEESDIDS. A compositionally biased stretch (basic residues) spans 364-374; sequence AKKKTPPKRER. 4 positions are modified to phosphoserine: Ser-377, Ser-380, Ser-381, and Ser-385. Residues 378–388 are compositionally biased toward polar residues; sequence GGSSKGTSRPG. Thr-389 bears the Phosphothreonine mark. The segment covering 389–406 has biased composition (low complexity); it reads TPSAEAASTSSTLRAAAS. Position 391 is a phosphoserine (Ser-391). Lys-407 is subject to N6-acetyllysine. A compositionally biased stretch (polar residues) spans 428–443; it reads GPQSLSGKSTPSSGDV. Phosphoserine occurs at positions 431, 433, and 436. A Phosphothreonine modification is found at Thr-437. The residue at position 440 (Ser-440) is a Phosphoserine.

Belongs to the TFIIF alpha subunit family. In terms of assembly, heterodimer of an alpha and a beta subunit. Interacts with GTF2F2, CTDP1, TAF6/TAFII80 and URI1. Interacts with GTF2B (via C-terminus and preferentially via acetylated form); this interaction prevents binding of GTF2B to GTF2F2. Part of TBP-based Pol II pre-initiation complex (PIC), in which Pol II core assembles with general transcription factors and other specific initiation factors including GTF2E1, GTF2E2, GTF2F1, GTF2F2, TCEA1, ERCC2, ERCC3, GTF2H2, GTF2H3, GTF2H4, GTF2H5, GTF2A1, GTF2A2, GTF2B and TBP; this large multi-subunit PIC complex mediates DNA unwinding and targets Pol II core to the transcription start site where the first phosphodiester bond forms. Phosphorylated on Ser and other residues by TAF1 and casein kinase II-like kinases.

Its subcellular location is the nucleus. TFIIF is a general transcription initiation factor that binds to RNA polymerase II and helps to recruit it to the initiation complex in collaboration with TFIIB. It promotes transcription elongation. This Mus musculus (Mouse) protein is General transcription factor IIF subunit 1 (Gtf2f1).